The following is a 462-amino-acid chain: Hemopexin (462 aa).

A signal peptide spans 1 to 23; sequence MARVLGAPVALGLWSLCWSLAIA. Threonine 24 and threonine 29 each carry an O-linked (GalNAc...) threonine glycan. Positions 29 to 48 are disordered; the sequence is TSAHGNVAEGETKPDPDVTE. Residues 30–40 are O-glycosylated at one site; it reads SAHGNVAEGET. The span at 38–48 shows a compositional bias: basic and acidic residues; it reads GETKPDPDVTE. Disulfide bonds link cysteine 50/cysteine 231, cysteine 149/cysteine 154, and cysteine 188/cysteine 200. 4 Hemopexin repeats span residues 53 to 93, 94 to 139, 140 to 184, and 185 to 231; these read GWSF…WKNF, PSPV…FPGI, PSPL…SWPA, and VGNC…FMPC. N-linked (GlcNAc...) (complex) asparagine glycosylation occurs at asparagine 64. A heme-binding site is contributed by histidine 79. Heme is bound at residue histidine 150. Asparagine 187 carries N-linked (GlcNAc...) (complex) asparagine glycosylation. Residue histidine 236 participates in heme binding. N-linked (GlcNAc...) asparagine glycans are attached at residues asparagine 240 and asparagine 246. 3 disulfides stabilise this stretch: cysteine 257-cysteine 460, cysteine 366-cysteine 408, and cysteine 418-cysteine 435. Hemopexin repeat units follow at residues 259 to 304, 305 to 352, 357 to 396, and 400 to 450; these read PHLV…WPQG, PSAV…VGTP, LDSVDAAFICPGSSRLHIMAGRRLWWLDLKSGAQATWTEL, and HEKV…ALPQ. Residue histidine 293 coordinates heme. Asparagine 453 carries N-linked (GlcNAc...) (complex) asparagine glycosylation.

Belongs to the hemopexin family. In terms of assembly, interacts with FLVCR1. As to quaternary structure, (Microbial infection) Interacts with hepatitis E virus/HEV protein ORF3. N- and O-glycosylated. O-glycosylated with core 1 or possibly core 8 glycans. O-glycosylation in the 30-40 region is minor compared to glycosylation at Thr-24 and Thr-29. Expressed by the liver and secreted in plasma.

It localises to the secreted. Its function is as follows. Binds heme and transports it to the liver for breakdown and iron recovery, after which the free hemopexin returns to the circulation. The chain is Hemopexin (HPX) from Homo sapiens (Human).